A 101-amino-acid chain; its full sequence is Small ribosomal subunit protein uS14 (101 aa).

It belongs to the universal ribosomal protein uS14 family. In terms of assembly, part of the 30S ribosomal subunit. Contacts proteins S3 and S10.

Its function is as follows. Binds 16S rRNA, required for the assembly of 30S particles and may also be responsible for determining the conformation of the 16S rRNA at the A site. The protein is Small ribosomal subunit protein uS14 of Beijerinckia indica subsp. indica (strain ATCC 9039 / DSM 1715 / NCIMB 8712).